A 626-amino-acid chain; its full sequence is Probable potassium transport system protein Kup (626 aa).

12 helical membrane-spanning segments follow: residues 13-33, 53-73, 102-122, 138-158, 169-189, 207-227, 248-268, 277-297, 338-358, 367-387, 399-419, and 421-441; these read VALMMGALGVVYGDIGTSPLY, VLSILFWLLMVVVSFKYVLLI, FFVVLGIFGAALFYGDSMITP, HTLDPWIVPLALLVLLALFAI, LFGPVMVVWFATLGVLGGWQV, FVFEFPVMSFLLLGAVVLALT, WFSMVLPSLTLCYLGQGALLL, PFFLMAPEWGLAALVGLATVA, IYLPQVNALLLCAVLVLVITF, AYGFAVTGTMLMTSILAFAVL, WMLVLGVLLIIDVLLFSANIF, and IHEGGWMPLLVGVVVFTLMMT.

It belongs to the HAK/KUP transporter (TC 2.A.72) family.

Its subcellular location is the cell inner membrane. It carries out the reaction K(+)(in) + H(+)(in) = K(+)(out) + H(+)(out). Functionally, transport of potassium into the cell. Likely operates as a K(+):H(+) symporter. This is Probable potassium transport system protein Kup from Bordetella avium (strain 197N).